Here is a 427-residue protein sequence, read N- to C-terminus: Histidinol dehydrogenase (427 aa).

NAD(+) contacts are provided by Y123, Q185, and N208. Substrate-binding residues include S231, Q253, and H256. Zn(2+)-binding residues include Q253 and H256. Catalysis depends on proton acceptor residues E321 and H322. Substrate contacts are provided by H322, D355, E409, and H414. A Zn(2+)-binding site is contributed by D355. Position 414 (H414) interacts with Zn(2+).

The protein belongs to the histidinol dehydrogenase family. Zn(2+) is required as a cofactor.

It carries out the reaction L-histidinol + 2 NAD(+) + H2O = L-histidine + 2 NADH + 3 H(+). The protein operates within amino-acid biosynthesis; L-histidine biosynthesis; L-histidine from 5-phospho-alpha-D-ribose 1-diphosphate: step 9/9. Catalyzes the sequential NAD-dependent oxidations of L-histidinol to L-histidinaldehyde and then to L-histidine. This chain is Histidinol dehydrogenase (hisD), found in Bacillus subtilis (strain 168).